A 335-amino-acid chain; its full sequence is 4-hydroxy-3-methylbut-2-enyl diphosphate reductase 2 (335 aa).

Cys37 contributes to the [4Fe-4S] cluster binding site. Residues His66 and His99 each coordinate (2E)-4-hydroxy-3-methylbut-2-enyl diphosphate. Residues His66 and His99 each coordinate dimethylallyl diphosphate. 2 residues coordinate isopentenyl diphosphate: His66 and His99. Residue Cys121 coordinates [4Fe-4S] cluster. Residue His149 participates in (2E)-4-hydroxy-3-methylbut-2-enyl diphosphate binding. His149 is a dimethylallyl diphosphate binding site. His149 lines the isopentenyl diphosphate pocket. Glu151 functions as the Proton donor in the catalytic mechanism. Thr189 contacts (2E)-4-hydroxy-3-methylbut-2-enyl diphosphate. Cys219 serves as a coordination point for [4Fe-4S] cluster. (2E)-4-hydroxy-3-methylbut-2-enyl diphosphate-binding residues include Ser247, Ser248, Asn249, and Ser292. Dimethylallyl diphosphate is bound by residues Ser247, Ser248, Asn249, and Ser292. Isopentenyl diphosphate-binding residues include Ser247, Ser248, Asn249, and Ser292.

Belongs to the IspH family. It depends on [4Fe-4S] cluster as a cofactor.

The enzyme catalyses isopentenyl diphosphate + 2 oxidized [2Fe-2S]-[ferredoxin] + H2O = (2E)-4-hydroxy-3-methylbut-2-enyl diphosphate + 2 reduced [2Fe-2S]-[ferredoxin] + 2 H(+). The catalysed reaction is dimethylallyl diphosphate + 2 oxidized [2Fe-2S]-[ferredoxin] + H2O = (2E)-4-hydroxy-3-methylbut-2-enyl diphosphate + 2 reduced [2Fe-2S]-[ferredoxin] + 2 H(+). It functions in the pathway isoprenoid biosynthesis; dimethylallyl diphosphate biosynthesis; dimethylallyl diphosphate from (2E)-4-hydroxy-3-methylbutenyl diphosphate: step 1/1. The protein operates within isoprenoid biosynthesis; isopentenyl diphosphate biosynthesis via DXP pathway; isopentenyl diphosphate from 1-deoxy-D-xylulose 5-phosphate: step 6/6. In terms of biological role, catalyzes the conversion of 1-hydroxy-2-methyl-2-(E)-butenyl 4-diphosphate (HMBPP) into a mixture of isopentenyl diphosphate (IPP) and dimethylallyl diphosphate (DMAPP). Acts in the terminal step of the DOXP/MEP pathway for isoprenoid precursor biosynthesis. Has a higher activity compared with LytB2. Is essential for M.tuberculosis growth in vitro. The protein is 4-hydroxy-3-methylbut-2-enyl diphosphate reductase 2 of Mycobacterium tuberculosis (strain ATCC 25618 / H37Rv).